We begin with the raw amino-acid sequence, 95 residues long: Aspartyl/glutamyl-tRNA(Asn/Gln) amidotransferase subunit C (95 aa).

It belongs to the GatC family. As to quaternary structure, heterotrimer of A, B and C subunits.

The enzyme catalyses L-glutamyl-tRNA(Gln) + L-glutamine + ATP + H2O = L-glutaminyl-tRNA(Gln) + L-glutamate + ADP + phosphate + H(+). It carries out the reaction L-aspartyl-tRNA(Asn) + L-glutamine + ATP + H2O = L-asparaginyl-tRNA(Asn) + L-glutamate + ADP + phosphate + 2 H(+). Allows the formation of correctly charged Asn-tRNA(Asn) or Gln-tRNA(Gln) through the transamidation of misacylated Asp-tRNA(Asn) or Glu-tRNA(Gln) in organisms which lack either or both of asparaginyl-tRNA or glutaminyl-tRNA synthetases. The reaction takes place in the presence of glutamine and ATP through an activated phospho-Asp-tRNA(Asn) or phospho-Glu-tRNA(Gln). This is Aspartyl/glutamyl-tRNA(Asn/Gln) amidotransferase subunit C from Nitrobacter hamburgensis (strain DSM 10229 / NCIMB 13809 / X14).